A 151-amino-acid chain; its full sequence is 3-hydroxyacyl-[acyl-carrier-protein] dehydratase FabZ (151 aa).

The active site involves His-54.

Belongs to the thioester dehydratase family. FabZ subfamily.

Its subcellular location is the cytoplasm. It catalyses the reaction a (3R)-hydroxyacyl-[ACP] = a (2E)-enoyl-[ACP] + H2O. Its function is as follows. Involved in unsaturated fatty acids biosynthesis. Catalyzes the dehydration of short chain beta-hydroxyacyl-ACPs and long chain saturated and unsaturated beta-hydroxyacyl-ACPs. In Sodalis glossinidius (strain morsitans), this protein is 3-hydroxyacyl-[acyl-carrier-protein] dehydratase FabZ.